Here is a 676-residue protein sequence, read N- to C-terminus: Envelope glycoprotein (676 aa).

The signal sequence occupies residues 1–32 (MEGLSLLQLPRDKFRKSSFFVWVIILFQKAFS). Residues 33–650 (MPLGVVTNST…DDNWWTGWRQ (618 aa)) lie on the Extracellular side of the membrane. Asn40 carries an N-linked (GlcNAc...) asparagine; by host glycan. 5 disulfides stabilise this stretch: Cys53/Cys609, Cys108/Cys135, Cys121/Cys147, Cys511/Cys556, and Cys601/Cys608. The receptor-binding stretch occupies residues 54-201 (KDHLASTDQL…TFLQSPPIRE (148 aa)). N-linked (GlcNAc...) asparagine; by host glycans are attached at residues Asn204, Asn208, Asn238, Asn257, Asn268, Asn296, and Asn314. Positions 305-485 (ELSFETLSLN…STSNGLITST (181 aa)) are mucin-like region. Residues 313–351 (LNETEDDDATSSRTTKGRISDRATRKYSDLVPKDSPGMV) form a disordered region. The segment covering 330–344 (RISDRATRKYSDLVP) has biased composition (basic and acidic residues). Residue Asn366 is glycosylated (N-linked (GlcNAc...) asparagine; by host). Positions 406-458 (SSSQILSSSPTMAPSPETQTSTTYTPKLPVMTTEESTTPPRNSPGSTTEAPTL) are disordered. Polar residues-rich tracts occupy residues 415–430 (PTMAPSPETQTSTTYT) and 438–458 (TEESTTPPRNSPGSTTEAPTL). Asn463 carries an N-linked (GlcNAc...) asparagine; by host glycan. Residues 524 to 539 (HNAAGIAWIPYFGPGA) form a fusion peptide region. The stretch at 554 to 595 (LVCGLRQLANETTQALQLFLRATTELRTYTILNRKAIDFLLR) forms a coiled coil. A glycan (N-linked (GlcNAc...) asparagine; by host) is linked at Asn563. Residues 615–634 (WTKNITDKINQIIHDFIDNP) are a coiled coil. Asn618 is a glycosylation site (N-linked (GlcNAc...) asparagine; by host). Residues 651 to 671 (WIPAGIGITGIIIAIIALLCV) form a helical membrane-spanning segment. Residues Cys670 and Cys672 are each lipidated (S-palmitoyl cysteine; by host). Residues 672-676 (CKLLC) lie on the Cytoplasmic side of the membrane.

This sequence belongs to the filoviruses glycoprotein family. Homotrimer; each monomer consists of a GP1 and a GP2 subunit linked by disulfide bonds. The resulting peplomers (GP1,2) protrude from the virus surface as spikes. Interacts with host integrin alpha-V/ITGAV. Interacts with host CLEC10A. Binds also to host CD209 and CLEC4M/DC-SIGN(R). Interacts with host FOLR1. Interacts with BST2; this interaction inhibits the antiviral effect of BST2 and this allows viral release from infected cells. Interacts with host FCN1; this interaction enhances viral entry. Interacts with host TLR4; this interaction induces cell death in T-lymphocytes or proinflammatory cytokines and SOCS1 production in monocytes. In terms of assembly, interacts with host entry receptor NPC1. As to quaternary structure, GP1 and GP2delta are part of GP1,2delta soluble complexes released by ectodomain shedding. In terms of processing, the signal peptide region modulates GP's high mannose glycosylation, thereby determining the efficiency of the interactions with DC-SIGN(R). Post-translationally, N-glycosylated. O-glycosylated in the mucin-like region. In terms of processing, palmitoylation of GP2 is not required for its function. Post-translationally, specific enzymatic cleavages in vivo yield mature proteins. The precursor is processed into GP1 and GP2 by host cell furin in the trans Golgi, and maybe by other host proteases, to yield the mature GP1 and GP2 proteins. The cleavage site corresponds to the furin optimal cleavage sequence [KR]-X-[KR]-R. This cleavage does not seem to be required for function. After the internalization of the virus into cell endosomes, GP1 C-terminus is removed by the endosomal proteases cathepsin B, cathepsin L, or both, leaving a 19-kDa N-terminal fragment which is further digested by cathepsin B. Proteolytic processing of GP1,2 by host ADAM17 can remove the transmembrane anchor of GP2 and leads to shedding of complexes consisting in GP1 and truncated GP2 (GP1,2delta).

It localises to the virion membrane. Its subcellular location is the host cell membrane. It is found in the secreted. Functionally, trimeric GP1,2 complexes form the virion surface spikes and mediate the viral entry processes, with GP1 acting as the receptor-binding subunit and GP2 as the membrane fusion subunit. At later times of infection, down-regulates the expression of various host cell surface molecules that are essential for immune surveillance and cell adhesion. Down-modulates several integrins including ITGA1, ITGA2, ITGA3, ITGA4, ITGA5, ITGA6, ITGAV and ITGB1. This decrease in cell adhesion molecules may lead to cell detachment, contributing to the disruption of blood vessel integrity and hemorrhages developed during infection (cytotoxicity). Interacts with host TLR4 and thereby stimulates the differentiation and activation of monocytes leading to bystander death of T-lymphocytes. Down-regulates as well the function of host natural killer cells. Counteracts the antiviral effect of host BST2/tetherin that restricts release of progeny virions from infected cells. However, cooperates with VP40 and host BST2 to activate canonical NF-kappa-B pathway in a manner dependent on neddylation. Functions as a decoy for anti-GP1,2 antibodies thereby contributing to viral immune evasion. Interacts and activates host macrophages and dendritic cells inducing up-regulation of cytokine transcription. This effect is mediated throught activation of host TLR4. In terms of biological role, responsible for binding to the receptor(s) on target cells. Interacts with CD209/DC-SIGN and CLEC4M/DC-SIGNR which act as cofactors for virus entry into dendritic cells (DCs) and endothelial cells. Binding to the macrophage specific lectin CLEC10A also seem to enhance virus infectivity. Interaction with FOLR1/folate receptor alpha may be a cofactor for virus entry in some cell types, although results are contradictory. Members of the Tyro3 receptor tyrosine kinase family also seem to be cell entry factors in filovirus infection. Once attached, the virions are internalized through clathrin-dependent endocytosis and/or macropinocytosis. After internalization of the virus into the endosomes of the host cell, proteolysis of GP1 by two cysteine proteases, CTSB/cathepsin B and CTSL/cathepsin L removes the glycan cap and allows GP1 binding to the host entry receptor NPC1. NPC1-binding, Ca(2+) and acidic pH induce a conformational change of GP2, which unmasks its fusion peptide and permit membranes fusion. Its function is as follows. Acts as a class I viral fusion protein. Under the current model, the protein has at least 3 conformational states: pre-fusion native state, pre-hairpin intermediate state, and post-fusion hairpin state. During viral and target cell membrane fusion, the coiled coil regions (heptad repeats) assume a trimer-of-hairpins structure, positioning the fusion peptide in close proximity to the C-terminal region of the ectodomain. The formation of this structure appears to drive apposition and subsequent fusion of viral and target cell membranes. Responsible for penetration of the virus into the cell cytoplasm by mediating the fusion of the membrane of the endocytosed virus particle with the endosomal membrane. Low pH in endosomes induces an irreversible conformational change in GP2, releasing the fusion hydrophobic peptide. This chain is Envelope glycoprotein (GP), found in Epomops franqueti (Franquet's epauletted fruit bat).